The following is a 352-amino-acid chain: MMYYLYSHAGINIFQYITFRAGAAFFIAFFLALLFMPRFIQWARNQKAAQPISEFAPQGHRGKANTPTMGGLVFIGATLLASLLCAKLNNLYVLAGLAVILLFGLIGLRDDAVKVLNHSNAGLSSRVKMLYLVLAGASVSAALFYFGMEDDLYIPFNKNPLLSMGIVAILFWTLVMVATSNAVNITDGLDGLATVPSVYALVSLSVFVYIAGHAGLSSYLLWPKITDSGEAVIVSAALVGALIGFLWFNCHPAQLFMGDSGSLSIGGFIAYMAIISKNEFLLFLIGSIFVIETVSVILQIGSYKTRGKRIFLMAPIHHHFEVKGWAETKIIVRFWIIALMSNIIALLTLKVR.

A run of 10 helical transmembrane segments spans residues 16 to 36 (YITF…LLFM), 66 to 86 (TPTM…LLCA), 88 to 108 (LNNL…LIGL), 129 to 149 (MLYL…FGME), 160 to 180 (PLLS…VATS), 191 to 211 (GLAT…VYIA), 228 to 248 (SGEA…FLWF), 255 to 275 (LFMG…MAII), 280 to 300 (FLLF…ILQI), and 329 to 349 (KIIV…LLTL).

The protein belongs to the glycosyltransferase 4 family. MraY subfamily. The cofactor is Mg(2+).

The protein localises to the cell inner membrane. It carries out the reaction UDP-N-acetyl-alpha-D-muramoyl-L-alanyl-gamma-D-glutamyl-meso-2,6-diaminopimeloyl-D-alanyl-D-alanine + di-trans,octa-cis-undecaprenyl phosphate = di-trans,octa-cis-undecaprenyl diphospho-N-acetyl-alpha-D-muramoyl-L-alanyl-D-glutamyl-meso-2,6-diaminopimeloyl-D-alanyl-D-alanine + UMP. It functions in the pathway cell wall biogenesis; peptidoglycan biosynthesis. Its function is as follows. Catalyzes the initial step of the lipid cycle reactions in the biosynthesis of the cell wall peptidoglycan: transfers peptidoglycan precursor phospho-MurNAc-pentapeptide from UDP-MurNAc-pentapeptide onto the lipid carrier undecaprenyl phosphate, yielding undecaprenyl-pyrophosphoryl-MurNAc-pentapeptide, known as lipid I. The sequence is that of Phospho-N-acetylmuramoyl-pentapeptide-transferase from Wolinella succinogenes (strain ATCC 29543 / DSM 1740 / CCUG 13145 / JCM 31913 / LMG 7466 / NCTC 11488 / FDC 602W) (Vibrio succinogenes).